Here is a 291-residue protein sequence, read N- to C-terminus: Secretory carrier-associated membrane protein 5 (291 aa).

The segment covering 1-10 has biased composition (basic and acidic residues); sequence MGGRYDRNTF. The disordered stretch occupies residues 1 to 66; the sequence is MGGRYDRNTF…GSGAQDLKKK (66 aa). At 1–126 the chain is on the cytoplasmic side; the sequence is MGGRYDRNTF…EILVRLQRLQ (126 aa). A Phosphoserine modification is found at Ser34. A coiled-coil region spans residues 58 to 94; the sequence is SGAQDLKKKEKELQAKEADLRRREQDLKRKQDAAARA. 4 helical membrane-spanning segments follow: residues 127 to 147, 159 to 179, 194 to 214, and 242 to 262; these read YIAF…IIAV, IWLL…VLWY, FGWF…AAVA, and IFYF…IWVI. Residues 263–288 lie on the Cytoplasmic side of the membrane; that stretch reads QQVYMYFRGSGKADDMRRDAARGAMR.

It belongs to the SCAMP family.

The protein localises to the cell membrane. Its subcellular location is the cytoplasmic vesicle. The protein resides in the secretory vesicle membrane. Its function is as follows. Probably involved in membrane trafficking. This is Secretory carrier-associated membrane protein 5 (SCAMP5) from Arabidopsis thaliana (Mouse-ear cress).